Reading from the N-terminus, the 173-residue chain is CKLF-like MARVEL transmembrane domain-containing protein 8 (173 aa).

The MARVEL domain occupies 36 to 168 (FLRTLPGFLI…NTYFSFIAWR (133 aa)). Helical transmembrane passes span 40-60 (LPGF…TLIA), 70-90 (FGWV…FLII), 105-125 (TTVG…AAVV), and 147-167 (FFAF…FIAW).

Belongs to the chemokine-like factor family. In terms of tissue distribution, highly expressed in liver and pancreas.

It localises to the membrane. Its subcellular location is the cytoplasm. The protein resides in the nucleus. The chain is CKLF-like MARVEL transmembrane domain-containing protein 8 (CMTM8) from Homo sapiens (Human).